The primary structure comprises 660 residues: DNA mismatch repair protein MutL (660 aa).

Belongs to the DNA mismatch repair MutL/HexB family.

This protein is involved in the repair of mismatches in DNA. It is required for dam-dependent methyl-directed DNA mismatch repair. May act as a 'molecular matchmaker', a protein that promotes the formation of a stable complex between two or more DNA-binding proteins in an ATP-dependent manner without itself being part of a final effector complex. The sequence is that of DNA mismatch repair protein MutL from Streptococcus pyogenes serotype M3 (strain ATCC BAA-595 / MGAS315).